The following is a 491-amino-acid chain: (1S)-1-hydroxy-luvungin A synthase CYP88A37 (491 aa).

A helical transmembrane segment spans residues 5 to 25; the sequence is FSWLILALAIFIGTYAFVFGV. Cys-439 serves as a coordination point for heme.

It belongs to the cytochrome P450 family. Requires heme as cofactor. As to expression, expressed in maturing fruits and in juice vesicles.

The protein resides in the membrane. It carries out the reaction luvungin A + reduced [NADPH--hemoprotein reductase] + O2 = (1S)-1-hydroxy-luvungin A + oxidized [NADPH--hemoprotein reductase] + H2O + H(+). Its pathway is secondary metabolite biosynthesis; terpenoid biosynthesis. Its function is as follows. Monooxygenase involved in the biosynthesis of limonoids triterpene natural products such as limonin, a compound with insecticidal activity responsible for the bitter taste in citrus. Catalyzes the conversion of luvungin A to (1S)-1-hydroxy-luvungin A. The protein is (1S)-1-hydroxy-luvungin A synthase CYP88A37 of Citrus sinensis (Sweet orange).